A 359-amino-acid polypeptide reads, in one-letter code: Methylthioribose-1-phosphate isomerase (359 aa).

Asp235 serves as the catalytic Proton donor.

Belongs to the eIF-2B alpha/beta/delta subunits family. MtnA subfamily.

The protein resides in the cytoplasm. It localises to the nucleus. It catalyses the reaction 5-(methylsulfanyl)-alpha-D-ribose 1-phosphate = 5-(methylsulfanyl)-D-ribulose 1-phosphate. It participates in amino-acid biosynthesis; L-methionine biosynthesis via salvage pathway; L-methionine from S-methyl-5-thio-alpha-D-ribose 1-phosphate: step 1/6. Functionally, catalyzes the interconversion of methylthioribose-1-phosphate (MTR-1-P) into methylthioribulose-1-phosphate (MTRu-1-P). The sequence is that of Methylthioribose-1-phosphate isomerase (mri1) from Schizosaccharomyces pombe (strain 972 / ATCC 24843) (Fission yeast).